The primary structure comprises 420 residues: Threonine aspartase 1 (420 aa).

The segment at methionine 1–valine 25 is disordered. Catalysis depends on threonine 234, which acts as the Nucleophile.

This sequence belongs to the Ntn-hydrolase family. Intramolecular proteolysis generates 2 subunits, alpha and beta, which reassemble through a non-covalent association to form the fully active enzyme.

In terms of biological role, protease responsible for KMT2A/MLL1 and KMT2D/MLL2 processing and activation. Through substrate activation, it controls the expression of HOXA genes, and the expression of key cell cycle regulators including CCNA1, CCNB1, CCNE1 and CDKN2A. In Mus musculus (Mouse), this protein is Threonine aspartase 1 (Tasp1).